Here is a 456-residue protein sequence, read N- to C-terminus: MNLWTKIFQPPRHIKEISDPELVKKQYKYWRVRIFYSMFFGYVFFYFTRKSFTFAMPTLIADLGFDKAQLGIIGSTLYITYGISKFVSGVMSDQSNPRYFMATGLIITGLSNIFFGLSSTVPLFVLFWGINGWFQGWGWPPCARLLTHWYSKSERGTWWSVWSTSHNIGGALIPVLTGIAIDYAGWRGAMFIPGIICIIMGFILIDRLRDTPQSLGLPAIEKFKKEDLSHPHEETTADILEEEAERELSTKEILFTYVLSNKWLWFLSFASFFIYVVRMAVNDWSALYLIETKNYSTVKANLCVSLFEIGGLFGMLLAGWLSDTISKGKRGPMNVVFSLGLLFSILGLWGTHDRSIWWADGAFLFIIGFFLFGPQMMIGLAAAELSHKKAAGTASGFTGWFAYFGAAFAGYPLGKVAQDWGWHGFFVALLACALIALLFFLPTWNASEQSLRKHSH.

11 helical membrane passes run 34 to 54 (IFYSMFFGYVFFYFTRKSFTF), 70 to 90 (LGIIGSTLYITYGISKFVSGV), 113 to 133 (IFFGLSSTVPLFVLFWGINGW), 161 to 181 (VWSTSHNIGGALIPVLTGIAI), 185 to 205 (GWRGAMFIPGIICIIMGFILI), 257 to 277 (YVLSNKWLWFLSFASFFIYVV), 302 to 322 (LCVSLFEIGGLFGMLLAGWLS), 331 to 351 (GPMNVVFSLGLLFSILGLWGT), 362 to 382 (AFLFIIGFFLFGPQMMIGLAA), 394 to 414 (ASGFTGWFAYFGAAFAGYPLG), and 421 to 441 (GWHGFFVALLACALIALLFFL).

It belongs to the major facilitator superfamily. Organophosphate:Pi antiporter (OPA) (TC 2.A.1.4) family.

The protein localises to the cell membrane. Transport protein for sugar phosphate uptake. This is Probable hexose phosphate transport protein from Chlamydia muridarum (strain MoPn / Nigg).